The sequence spans 533 residues: D-3-phosphoglycerate dehydrogenase (533 aa).

Position 2 is an N-acetylalanine (alanine 2). Serine 14 carries the post-translational modification Phosphoserine. Lysine 21 carries the N6-acetyllysine; alternate modification. Lysine 21 is covalently cross-linked (Glycyl lysine isopeptide (Lys-Gly) (interchain with G-Cter in SUMO1); alternate). A Glycyl lysine isopeptide (Lys-Gly) (interchain with G-Cter in SUMO2); alternate cross-link involves residue lysine 21. An N6-acetyllysine modification is found at lysine 58. NAD(+)-binding positions include threonine 78, 155–156 (RI), aspartate 175, threonine 207, 234–236 (CAR), and aspartate 260. Threonine 78 bears the Phosphothreonine mark. The active site involves arginine 236. Glutamate 265 is a catalytic residue. Residue histidine 283 is the Proton donor of the active site. Position 283-286 (283-286 (HLGA)) interacts with NAD(+).

It belongs to the D-isomer specific 2-hydroxyacid dehydrogenase family. Homotetramer. Liver, kidney, brain, testis.

It catalyses the reaction (2R)-3-phosphoglycerate + NAD(+) = 3-phosphooxypyruvate + NADH + H(+). Its pathway is amino-acid biosynthesis; L-serine biosynthesis; L-serine from 3-phospho-D-glycerate: step 1/3. Functionally, catalyzes the reversible oxidation of 3-phospho-D-glycerate to 3-phosphonooxypyruvate, the first step of the phosphorylated L-serine biosynthesis pathway. Does not catalyze the reversible oxidation of 2-hydroxyglutarate to 2-oxoglutarate and the reversible oxidation of (S)-malate to oxaloacetate. The protein is D-3-phosphoglycerate dehydrogenase (Phgdh) of Rattus norvegicus (Rat).